Consider the following 328-residue polypeptide: Sulfate adenylyltransferase subunit 2 (328 aa).

The tract at residues 309-328 (RAIDKDQTASMEKKKQEGYF) is disordered.

The protein belongs to the PAPS reductase family. CysD subfamily. As to quaternary structure, heterodimer composed of CysD, the smaller subunit, and CysN.

The enzyme catalyses sulfate + ATP + H(+) = adenosine 5'-phosphosulfate + diphosphate. The protein operates within sulfur metabolism; hydrogen sulfide biosynthesis; sulfite from sulfate: step 1/3. In terms of biological role, with CysN forms the ATP sulfurylase (ATPS) that catalyzes the adenylation of sulfate producing adenosine 5'-phosphosulfate (APS) and diphosphate, the first enzymatic step in sulfur assimilation pathway. APS synthesis involves the formation of a high-energy phosphoric-sulfuric acid anhydride bond driven by GTP hydrolysis by CysN coupled to ATP hydrolysis by CysD. The sequence is that of Sulfate adenylyltransferase subunit 2 from Hyphomonas neptunium (strain ATCC 15444).